The sequence spans 205 residues: High frequency lysogenization protein HflD homolog (205 aa).

This sequence belongs to the HflD family.

The protein localises to the cytoplasm. Its subcellular location is the cell inner membrane. The chain is High frequency lysogenization protein HflD homolog from Vibrio atlanticus (strain LGP32) (Vibrio splendidus (strain Mel32)).